A 392-amino-acid polypeptide reads, in one-letter code: 1-deoxy-D-xylulose 5-phosphate reductoisomerase (392 aa).

Threonine 10, glycine 11, serine 12, isoleucine 13, and asparagine 124 together coordinate NADPH. Lysine 125 is a binding site for 1-deoxy-D-xylulose 5-phosphate. Glutamate 126 provides a ligand contact to NADPH. Aspartate 150 contacts Mn(2+). Positions 151, 152, 180, and 203 each coordinate 1-deoxy-D-xylulose 5-phosphate. Mn(2+) is bound at residue glutamate 152. NADPH is bound at residue glycine 209. Serine 216, asparagine 221, lysine 222, and glutamate 225 together coordinate 1-deoxy-D-xylulose 5-phosphate. Residue glutamate 225 coordinates Mn(2+).

The protein belongs to the DXR family. Requires Mg(2+) as cofactor. Mn(2+) is required as a cofactor.

It carries out the reaction 2-C-methyl-D-erythritol 4-phosphate + NADP(+) = 1-deoxy-D-xylulose 5-phosphate + NADPH + H(+). It participates in isoprenoid biosynthesis; isopentenyl diphosphate biosynthesis via DXP pathway; isopentenyl diphosphate from 1-deoxy-D-xylulose 5-phosphate: step 1/6. Catalyzes the NADPH-dependent rearrangement and reduction of 1-deoxy-D-xylulose-5-phosphate (DXP) to 2-C-methyl-D-erythritol 4-phosphate (MEP). In Saccharophagus degradans (strain 2-40 / ATCC 43961 / DSM 17024), this protein is 1-deoxy-D-xylulose 5-phosphate reductoisomerase.